A 341-amino-acid chain; its full sequence is Phenylalanine--tRNA ligase alpha subunit (341 aa).

Glu-254 lines the Mg(2+) pocket.

Belongs to the class-II aminoacyl-tRNA synthetase family. Phe-tRNA synthetase alpha subunit type 1 subfamily. As to quaternary structure, tetramer of two alpha and two beta subunits. Mg(2+) is required as a cofactor.

The protein localises to the cytoplasm. It carries out the reaction tRNA(Phe) + L-phenylalanine + ATP = L-phenylalanyl-tRNA(Phe) + AMP + diphosphate + H(+). This Chlorobaculum parvum (strain DSM 263 / NCIMB 8327) (Chlorobium vibrioforme subsp. thiosulfatophilum) protein is Phenylalanine--tRNA ligase alpha subunit.